The sequence spans 161 residues: Deoxyuridine 5'-triphosphate nucleotidohydrolase (161 aa).

Residues 80 to 82 (RSG), Asn93, 97 to 99 (TVD), and Lys107 contribute to the substrate site.

The protein belongs to the dUTPase family. The cofactor is Mg(2+).

The enzyme catalyses dUTP + H2O = dUMP + diphosphate + H(+). The protein operates within pyrimidine metabolism; dUMP biosynthesis; dUMP from dCTP (dUTP route): step 2/2. Functionally, this enzyme is involved in nucleotide metabolism: it produces dUMP, the immediate precursor of thymidine nucleotides and it decreases the intracellular concentration of dUTP so that uracil cannot be incorporated into DNA. This Mesorhizobium japonicum (strain LMG 29417 / CECT 9101 / MAFF 303099) (Mesorhizobium loti (strain MAFF 303099)) protein is Deoxyuridine 5'-triphosphate nucleotidohydrolase.